We begin with the raw amino-acid sequence, 398 residues long: Isopenicillin N epimerase (398 aa).

Lys-219 carries the N6-(pyridoxal phosphate)lysine modification. Positions 243–264 (PQVSWGYRPDGENPSDERNRFG) are disordered. A compositionally biased stretch (basic and acidic residues) spans 251-264 (PDGENPSDERNRFG).

The protein belongs to the class-V pyridoxal-phosphate-dependent aminotransferase family. It depends on pyridoxal 5'-phosphate as a cofactor.

It carries out the reaction isopenicillin N = penicillin N. It functions in the pathway antibiotic biosynthesis; cephalosporin C biosynthesis. Functionally, catalyzes the reversible isomerization between isopenicillin N and penicillin N. This Amycolatopsis lactamdurans (Nocardia lactamdurans) protein is Isopenicillin N epimerase (cefD).